The sequence spans 200 residues: Cytochrome c biogenesis ATP-binding export protein CcmA (200 aa).

The ABC transporter domain occupies 2–200 (LDVIELDFDY…NKADYEEYHL (199 aa)). Residue 34-41 (GSNGAGKT) participates in ATP binding.

The protein belongs to the ABC transporter superfamily. CcmA exporter (TC 3.A.1.107) family. The complex is composed of two ATP-binding proteins (CcmA) and two transmembrane proteins (CcmB).

Its subcellular location is the cell inner membrane. It carries out the reaction heme b(in) + ATP + H2O = heme b(out) + ADP + phosphate + H(+). In terms of biological role, part of the ABC transporter complex CcmAB involved in the biogenesis of c-type cytochromes; once thought to export heme, this seems not to be the case, but its exact role is uncertain. Responsible for energy coupling to the transport system. This Legionella pneumophila (strain Paris) protein is Cytochrome c biogenesis ATP-binding export protein CcmA.